Consider the following 790-residue polypeptide: Probable E3 ubiquitin-protein ligase MARCHF10 (790 aa).

The interval 33–240 (LKRQEHKKEP…PQNEPHTALS (208 aa)) is disordered. A compositionally biased stretch (basic and acidic residues) spans 34–48 (KRQEHKKEPNEKKQE). Residues 61–70 (FSSGSSCKQS) are compositionally biased toward low complexity. S78 bears the Phosphoserine mark. Positions 218-227 (PLERQKKGDP) are enriched in basic and acidic residues. Polar residues predominate over residues 230-240 (RPQNEPHTALS). Residues 284–308 (LSLNNEQENYDTEEETRTEEELLLA) are a coiled coil. Disordered regions lie at residues 323–416 (GTSA…EDVS) and 507–569 (LSPI…RHLQ). Composition is skewed to polar residues over residues 355 to 370 (RKTS…SSPG), 406 to 416 (GVTQVSAEDVS), and 511 to 520 (RNRNPSAASE). The segment covering 521–533 (SHSEDTQGEEERA) has biased composition (basic and acidic residues). The segment covering 534-563 (STSQAQESPLLSDLPNPQSSMALGDSPSSP) has biased composition (polar residues). Residues 633 to 703 (DSEEEGDLCR…EMCKQGLLVD (71 aa)) form an RING-CH-type zinc finger. Zn(2+)-binding residues include C641, C644, C659, C661, H669, C672, C693, and C696. The interval 757 to 790 (ERMSRNYPQPRPEESESSESGDGNESNVYPGRVI) is disordered. The segment covering 774–783 (SESGDGNESN) has biased composition (low complexity).

The catalysed reaction is S-ubiquitinyl-[E2 ubiquitin-conjugating enzyme]-L-cysteine + [acceptor protein]-L-lysine = [E2 ubiquitin-conjugating enzyme]-L-cysteine + N(6)-ubiquitinyl-[acceptor protein]-L-lysine.. The protein operates within protein modification; protein ubiquitination. E3 ubiquitin-protein ligase. E3 ubiquitin ligases accept ubiquitin from an E2 ubiquitin-conjugating enzyme in the form of a thioester and then directly transfer the ubiquitin to targeted substrates. The protein is Probable E3 ubiquitin-protein ligase MARCHF10 (Marchf10) of Rattus norvegicus (Rat).